The primary structure comprises 1527 residues: Peroxidasin (1527 aa).

An N-terminal signal peptide occupies residues 1-23; that stretch reads MRFMLLMLQLLGLLLLLAGGVQS. The LRRNT domain maps to 24–53; sequence VYCPAGCTCLERTVRCIRAKLSAVPKLPQD. LRR repeat units follow at residues 51-74, 75-98, 99-122, 124-146, 147-170, and 172-196; these read PQDT…AFSG, LAQL…ALNG, LTAL…IFQR, PRLE…LFDN, LPRL…GFNR, and NNLK…LWRR. Ig-like C2-type domains are found at residues 236–322, 365–453, 458–545, and 553–643; these read PQFL…QPVR, PHFT…ARIE, PEIL…ATIK, and PQLA…ALVT. 4 cysteine pairs are disulfide-bonded: Cys-257/Cys-307, Cys-388/Cys-437, Cys-479/Cys-529, and Cys-574/Cys-627. Residue Asn-419 is glycosylated (N-linked (GlcNAc...) asparagine). Asn-616, Asn-673, Asn-682, Asn-731, and Asn-767 each carry an N-linked (GlcNAc...) asparagine glycan. Cys-768 and Cys-784 are disulfide-bonded. Asp-862 contacts heme b. Catalysis depends on His-863, which acts as the Proton acceptor. Asp-864 is a Ca(2+) binding site. 2 disulfides stabilise this stretch: Cys-882-Cys-892 and Cys-886-Cys-909. Ca(2+) contacts are provided by Thr-941, Tyr-943, Asp-945, and Ser-947. Asn-962 carries N-linked (GlcNAc...) asparagine glycosylation. An intrachain disulfide couples Cys-994 to Cys-1005. Residues Glu-1015 and His-1109 each coordinate heme b. Residues Asn-1120 and Asn-1213 are each glycosylated (N-linked (GlcNAc...) asparagine). Intrachain disulfides connect Cys-1212-Cys-1269 and Cys-1310-Cys-1336. Residues 1403-1441 are a coiled coil; sequence NEERVSGLEELIGSFQKELKKLHKKLRKLEDSCNSADSE. One can recognise a VWFC domain in the interval 1463 to 1524; sequence SHCVDDKGTT…PPEACCPHCP (62 aa).

The protein belongs to the peroxidase family. XPO subfamily. Homotrimer; disulfide-linked. Ca(2+) is required as a cofactor. Heme b serves as cofactor. As to expression, expressed in hemocytes. Also expressed in the fat body and gastric caeca.

It localises to the secreted. The enzyme catalyses (5R)-5-hydroxy-L-lysyl-[collagen] + L-methionyl-[collagen] + H2O2 = [collagen]-(5R)-5-hydroxy-L-lysyl-N-S-L-methionyl-[collagen] + 2 H2O + H(+). The catalysed reaction is bromide + H2O2 = hypobromite + H2O. It carries out the reaction (5R)-5-hydroxy-L-lysyl-[collagen] + L-methionyl-[collagen] + hypobromite = [collagen]-(5R)-5-hydroxy-L-lysyl-N-S-L-methionyl-[collagen] + bromide + H2O + H(+). It catalyses the reaction L-lysyl-[collagen] + L-methionyl-[collagen] + H2O2 = [collagen]-L-lysyl-N-S-L-methionyl-[collagen] + 2 H2O + H(+). The enzyme catalyses L-lysyl-[collagen] + L-methionyl-[collagen] + hypobromite = [collagen]-L-lysyl-N-S-L-methionyl-[collagen] + bromide + H2O + H(+). The catalysed reaction is L-tyrosyl-[protein] + bromide + H2O2 + H(+) = 3-bromo-L-tyrosyl-[protein] + 2 H2O. It carries out the reaction hypobromite + L-tyrosyl-[protein] + H(+) = 3-bromo-L-tyrosyl-[protein] + H2O. Its function is as follows. Catalyzes the two-electron oxidation of bromide by hydrogen peroxide and generates hypobromite as a reactive intermediate which mediates the formation of sulfilimine cross-links between methionine and hydroxylysine residues within an uncross-linked collagen IV NC1 hexamer. Plays a role in extracellular matrix consolidation, phagocytosis and defense. This is Peroxidasin from Drosophila melanogaster (Fruit fly).